Here is a 147-residue protein sequence, read N- to C-terminus: Hemoglobin subunit epsilon (147 aa).

A Globin domain is found at 3–147; sequence HFTAEEKATI…VATALAHKYH (145 aa). Phosphoserine occurs at positions 14 and 51. Heme b is bound by residues His-64 and His-93.

It belongs to the globin family. In terms of assembly, heterotetramer of two alpha chains and two epsilon chains in early embryonic hemoglobin Gower-2; two zeta chains and two epsilon chains in early embryonic hemoglobin Gower-1. In terms of tissue distribution, red blood cells.

The epsilon chain is a beta-type chain of early mammalian embryonic hemoglobin. The sequence is that of Hemoglobin subunit epsilon (HBE1) from Daubentonia madagascariensis (Aye-aye).